The chain runs to 227 residues: GRF-interacting factor 1 (227 aa).

Low complexity predominate over residues 124 to 139 (ALSPLQQQQQQQAAAA). Disordered regions lie at residues 124–160 (ALSP…LHGE) and 188–227 (GGGG…EEGS). Residues 217–227 (EYLKGTEEEGS) show a composition bias toward basic and acidic residues.

It belongs to the SS18 family. As to quaternary structure, interacts with GRF4. Highly expressed in internodes, nodes, developing spikelets and developing anthers. Expressed at low levels in roots and mature glumes.

It is found in the nucleus. The protein localises to the cytoplasm. Functionally, transcription coactivator that plays a role in the regulation of meristematic function in leaves, stems and inflorescences. May regulate leaf size, length of stem internodes, and seed size by promoting cell expansion. Transcription coactivator that plays a role in the regulation of grain size. Component of a network formed by the microRNA396 (miRNA396), the GRFs and their interacting factors (GIFs) acting in the regulation of meristem function, at least partially through the control of cell proliferation. Component of the miRNA396c-GRF4-GIF1 regulatory module that plays an important role in grain size determination. The chain is GRF-interacting factor 1 from Oryza sativa subsp. japonica (Rice).